The chain runs to 429 residues: Adenylosuccinate synthetase (429 aa).

Residues 11 to 17 (GDEGKGK) and 39 to 41 (GHT) contribute to the GTP site. Aspartate 12 functions as the Proton acceptor in the catalytic mechanism. Residues aspartate 12 and glycine 39 each contribute to the Mg(2+) site. Residues 12–15 (DEGK), 37–40 (NAGH), threonine 130, arginine 144, asparagine 226, threonine 241, and arginine 305 contribute to the IMP site. Residue histidine 40 is the Proton donor of the active site. Position 301–307 (301–307 (VTTGRRR)) interacts with substrate. Residues arginine 307, 333–335 (KLD), and 415–417 (GVG) contribute to the GTP site.

This sequence belongs to the adenylosuccinate synthetase family. In terms of assembly, homodimer. Requires Mg(2+) as cofactor.

It localises to the cytoplasm. The enzyme catalyses IMP + L-aspartate + GTP = N(6)-(1,2-dicarboxyethyl)-AMP + GDP + phosphate + 2 H(+). The protein operates within purine metabolism; AMP biosynthesis via de novo pathway; AMP from IMP: step 1/2. Its function is as follows. Plays an important role in the de novo pathway and in the salvage pathway of purine nucleotide biosynthesis. Catalyzes the first committed step in the biosynthesis of AMP from IMP. The chain is Adenylosuccinate synthetase from Yarrowia lipolytica (strain CLIB 122 / E 150) (Yeast).